The sequence spans 637 residues: 3D-(3,5/4)-trihydroxycyclohexane-1,2-dione hydrolase (637 aa).

Thiamine diphosphate is bound at residue glutamate 65. The segment at 441-521 (SLPGDLQRLW…INVLLFDNSG (81 aa)) is thiamine pyrophosphate binding. Residues aspartate 492 and asparagine 519 each coordinate Mg(2+).

It belongs to the TPP enzyme family. Mg(2+) serves as cofactor. It depends on thiamine diphosphate as a cofactor.

The enzyme catalyses 3D-3,5/4-trihydroxycyclohexane-1,2-dione + H2O = 5-deoxy-D-glucuronate + H(+). It participates in polyol metabolism; myo-inositol degradation into acetyl-CoA; acetyl-CoA from myo-inositol: step 3/7. In terms of biological role, involved in the cleavage of the C1-C2 bond of 3D-(3,5/4)-trihydroxycyclohexane-1,2-dione (THcHDO) to yield 5-deoxy-glucuronate (5DG). This is 3D-(3,5/4)-trihydroxycyclohexane-1,2-dione hydrolase from Halalkalibacterium halodurans (strain ATCC BAA-125 / DSM 18197 / FERM 7344 / JCM 9153 / C-125) (Bacillus halodurans).